A 129-amino-acid polypeptide reads, in one-letter code: Glycine cleavage system H protein (129 aa).

A Lipoyl-binding domain is found at 24–106 (IAVIGITAYA…YGDGWLIKVR (83 aa)). An N6-lipoyllysine modification is found at Lys-65.

Belongs to the GcvH family. As to quaternary structure, the glycine cleavage system is composed of four proteins: P, T, L and H. It depends on (R)-lipoate as a cofactor.

In terms of biological role, the glycine cleavage system catalyzes the degradation of glycine. The H protein shuttles the methylamine group of glycine from the P protein to the T protein. The chain is Glycine cleavage system H protein from Synechococcus sp. (strain JA-3-3Ab) (Cyanobacteria bacterium Yellowstone A-Prime).